The primary structure comprises 185 residues: Ribosome-recycling factor (185 aa).

It belongs to the RRF family.

It is found in the cytoplasm. In terms of biological role, responsible for the release of ribosomes from messenger RNA at the termination of protein biosynthesis. May increase the efficiency of translation by recycling ribosomes from one round of translation to another. The polypeptide is Ribosome-recycling factor (Streptococcus thermophilus (strain ATCC BAA-491 / LMD-9)).